The chain runs to 146 residues: Snaclec agkicetin-C subunit beta (146 aa).

Residues 1-23 (MGRFIFVSFGLLVVFLSLSGTGA) form the signal peptide. 3 disulfide bridges follow: Cys-25/Cys-36, Cys-53/Cys-142, and Cys-119/Cys-134. Residues 32–143 (YEGNCYLVVK…CSRTQPFVCK (112 aa)) enclose the C-type lectin domain.

Belongs to the snaclec family. Heterodimer of subunits alpha and beta; disulfide-linked. As to expression, expressed by the venom gland.

Its subcellular location is the secreted. Is a potent glycoprotein Ibalpha (GP1BA) antagonist. Concentration-dependently inhibits botrocetin-, ristocetin- and low dose thrombin-induced platelet aggregation. Inhibits platelet adhesion only through inhibiting the vWF interaction with GP1BA, but has minimal effect on other platelet receptors, such as alpha-IIb/beta-3 (ITGA2B/ITGB3) or alpha-2/beta-1 (ITGA2/ITGB1). Causes an instant severe thrombocytopenia in rats and is not lethal to mice. This is Snaclec agkicetin-C subunit beta from Deinagkistrodon acutus (Hundred-pace snake).